Here is a 157-residue protein sequence, read N- to C-terminus: Mediator of RNA polymerase II transcription subunit 22 (157 aa).

Belongs to the Mediator complex subunit 22 family. As to quaternary structure, component of the Mediator complex.

Its subcellular location is the nucleus. Functionally, component of the Mediator complex, a coactivator involved in the regulated transcription of nearly all RNA polymerase II-dependent genes. Mediator functions as a bridge to convey information from gene-specific regulatory proteins to the basal RNA polymerase II transcription machinery. Mediator is recruited to promoters by direct interactions with regulatory proteins and serves as a scaffold for the assembly of a functional preinitiation complex with RNA polymerase II and the general transcription factors. The sequence is that of Mediator of RNA polymerase II transcription subunit 22 (mdt-22) from Caenorhabditis elegans.